A 418-amino-acid polypeptide reads, in one-letter code: cAMP-dependent protein kinase type II-beta regulatory subunit (418 aa).

The dimerization and phosphorylation stretch occupies residues 2–153; that stretch reads SIEIPAGLTE…RLQEACKDIL (152 aa). The span at 45-57 shows a compositional bias: basic and acidic residues; the sequence is RKGTARFGHEGRT. Residues 45–98 form a disordered region; sequence RKGTARFGHEGRTWGDAGAAGGGGTPSKGVNFAEEPRHSDSENGEEEEEEAADA. Residue Thr69 is modified to Phosphothreonine. Ser83 and Ser85 each carry phosphoserine. Acidic residues predominate over residues 86-96; that stretch reads ENGEEEEEEAA. Residue Ser114 is modified to Phosphoserine. Residues 154–275, Glu223, Arg232, 276–418, Glu352, and Arg361 each bind 3',5'-cyclic AMP; these read LFKN…ESLP and FLKS…EPTA.

The protein belongs to the cAMP-dependent kinase regulatory chain family. As to quaternary structure, the inactive form of the enzyme is composed of two regulatory chains and two catalytic chains. Activation by cAMP produces two active catalytic monomers and a regulatory dimer that binds four cAMP molecules. Interacts with PRKACA and PRKACB. Interacts with the phosphorylated form of PJA2. Forms a complex composed of PRKAR2B, GSK3B and GSKIP through GSKIP interaction; facilitates PKA-induced phosphorylation and regulates GSK3B activity. Post-translationally, phosphorylated by the activated catalytic chain. In terms of tissue distribution, four types of regulatory chains are found: I-alpha, I-beta, II-alpha, and II-beta. Their expression varies among tissues and is in some cases constitutive and in others inducible.

The protein localises to the cytoplasm. It localises to the cell membrane. Its function is as follows. Regulatory subunit of the cAMP-dependent protein kinases involved in cAMP signaling in cells. Type II regulatory chains mediate membrane association by binding to anchoring proteins, including the MAP2 kinase. The sequence is that of cAMP-dependent protein kinase type II-beta regulatory subunit (PRKAR2B) from Bos taurus (Bovine).